Consider the following 556-residue polypeptide: Formate--tetrahydrofolate ligase (556 aa).

ATP is bound at residue 65–72 (TSAGEGKT).

Belongs to the formate--tetrahydrofolate ligase family.

The catalysed reaction is (6S)-5,6,7,8-tetrahydrofolate + formate + ATP = (6R)-10-formyltetrahydrofolate + ADP + phosphate. Its pathway is one-carbon metabolism; tetrahydrofolate interconversion. The sequence is that of Formate--tetrahydrofolate ligase from Kosmotoga olearia (strain ATCC BAA-1733 / DSM 21960 / TBF 19.5.1).